The following is a 632-amino-acid chain: MAU2 chromatid cohesion factor homolog (632 aa).

2 TPR repeats span residues 453-486 (GGFYYVQGLHAFHKNSFHEAKRFLRETLKMANAE) and 493-526 (SCSLVLLSHVFLSIGNSKESMNMVTPAMQLASKI).

This sequence belongs to the SCC4/mau-2 family. As to quaternary structure, interacts with Nipped-B to form the cohesin loading complex.

It localises to the nucleus. Its subcellular location is the nucleoplasm. Required for association of the cohesin complex with chromatin during interphase. Plays a role in sister chromatid cohesion and normal progression through prometaphase. The protein is MAU2 chromatid cohesion factor homolog of Drosophila sechellia (Fruit fly).